Consider the following 150-residue polypeptide: UPF0756 membrane protein HI_1074 (150 aa).

The next 4 membrane-spanning stretches (helical) occupy residues 1-21 (MTLQ…LGVL), 52-72 (YGVK…LVSG), 81-101 (GFLS…AWLA), and 123-143 (IIGV…AGIL).

This sequence belongs to the UPF0756 family.

The protein localises to the cell membrane. The sequence is that of UPF0756 membrane protein HI_1074 from Haemophilus influenzae (strain ATCC 51907 / DSM 11121 / KW20 / Rd).